The primary structure comprises 86 residues: Omega-theraphotoxin-Hhn1a 2 (86 aa).

The N-terminal stretch at 1 to 21 is a signal peptide; that stretch reads MKSIVFVALLGLALLAVVCSA. Positions 22-50 are excised as a propeptide; the sequence is SEDAHKELLKEVVRAMVVDKTDAVQAEER. 3 disulfides stabilise this stretch: cysteine 52-cysteine 66, cysteine 59-cysteine 71, and cysteine 65-cysteine 78.

This sequence belongs to the neurotoxin 10 (Hwtx-1) family. 17 (Hntx-9) subfamily. In terms of tissue distribution, expressed by the venom gland.

The protein localises to the secreted. Ion channel inhibitor. This is Omega-theraphotoxin-Hhn1a 2 from Cyriopagopus hainanus (Chinese bird spider).